The sequence spans 833 residues: MTRSPFRRLVFGTLRRLLYLWVRSETINQSSFTLNLDRSRPVFYALQSPSISDLAVIDTECRKAGLPRPVLSVAVGNLIEPSAYFYLTPAPDWLGRQDKRGAPPTLERLVAAVSQNPGEDAQIIPVSVFWGQSPDHESSAWKLLFADSWAVTGRLRRLVSILILGRKTRVQFSAPIHMRELVDQNKGHELTLRMSQRLLRTHFRNLKSAVIGPDVSHRRTVVKGLLDEPLVKQAIIEEAERENITQEKARERALSYGNEIASDYTYSVIRFMEVVLSWFWNKIYDGIKVSHIEGVQEIAPGHEVIYVPCHRSHIDYLLLSYLLFRNGLTPPHIAAGINLNMPVVGSLLRRGGAFFMRRTFKGSPLYTAVFTEYLHTLFTKGFPVEYFVEGGRSRTGRMLQPKTGMLAITLRSFLRNSRMPIVFIPVYIGYERVLEGRTYLGELRGATKKKESIFDIFKVIGALKQRFGQVSVNFGEPIRLAEFLDGEQPDWREQELAPQFRPDWLSETTHRLGERVAQHLNEAAAVNPMNLVAITLLSTQKLALDDQAMERVLDLYLTLLRAVPYSPHTTLPEGNGRSLIEHVKGMDLLAEQKDALGKILYLNEQNAVLMTYYRNNVLHIFALPSLLASFFQSSSRMSREQILRYTHALYPYLQSELFIRWPLSELDEVVDQWLAAFVEQGLLRFRNDAYVRPEPSSREFVLLTLLSRAIAQTLQRFYMAIALLLNSGPNTLNPEELEDLCTVMAQRLSILHGLNAPEFFDKSLFRHFIQTLLDLRVLRKDRAGKLSYHPMLGELAEGAAKRVLPAEIRLSIRQVALHSNEEEQNAGNESGAA.

The HXXXXD motif motif lies at 310–315 (HRSHID).

It belongs to the GPAT/DAPAT family.

The protein localises to the cell inner membrane. The catalysed reaction is sn-glycerol 3-phosphate + an acyl-CoA = a 1-acyl-sn-glycero-3-phosphate + CoA. It participates in phospholipid metabolism; CDP-diacylglycerol biosynthesis; CDP-diacylglycerol from sn-glycerol 3-phosphate: step 1/3. The protein is Glycerol-3-phosphate acyltransferase of Pseudomonas syringae pv. tomato (strain ATCC BAA-871 / DC3000).